We begin with the raw amino-acid sequence, 257 residues long: tRNA pseudouridine synthase A (257 aa).

D52 (nucleophile) is an active-site residue. Y111 serves as a coordination point for substrate.

It belongs to the tRNA pseudouridine synthase TruA family. Homodimer.

The enzyme catalyses uridine(38/39/40) in tRNA = pseudouridine(38/39/40) in tRNA. Its function is as follows. Formation of pseudouridine at positions 38, 39 and 40 in the anticodon stem and loop of transfer RNAs. The sequence is that of tRNA pseudouridine synthase A from Dinoroseobacter shibae (strain DSM 16493 / NCIMB 14021 / DFL 12).